A 983-amino-acid chain; its full sequence is Next to BRCA1 gene 1 protein (983 aa).

Positions 4 to 86 (QVTLNVTFKN…NQLQMQVHEG (83 aa)) constitute a PB1 domain. Ser-117 is modified (phosphoserine). Residues 126-149 (MKTTEEPTAEARSPVPCDTDKPQD) form a disordered region. The segment at 214 to 266 (SWHIACSHCQKRIVGVRYQCSLCPSYNICEDCEAGPYSHDTNHILLKFRRPVV) adopts a ZZ-type zinc-finger fold. Residues Cys-219, Cys-222, Cys-233, Cys-236, Cys-242, Cys-245, His-252, and His-256 each contribute to the Zn(2+) site. 2 ATG8 family proteins-binding regions span residues 544-638 (ASER…PASV) and 745-756 (ASSEDYIIILPE). Thr-588 bears the Phosphothreonine mark. 2 positions are modified to phosphoserine: Ser-592 and Ser-598. A disordered region spans residues 611 to 645 (EESEGAGLKASPDSTVLTKRKAETPASVEETEEDL). Residues 768–813 (MYSSALSQPGLERGAEGEPGIESGQEPAEARERLPERESQPKEQSI) form a disordered region. Positions 795 to 808 (AEARERLPERESQP) are enriched in basic and acidic residues. Residue Ser-855 is modified to Phosphoserine. The interval 867 to 894 (DHVRGEPRGSTGLANSRQKSCDHSRHHN) is disordered. Residues 930–974 (SEDQTAALMAHLFEMGFCDRQLNLRLLRKHNHNILQVVTELLQVN) enclose the UBA domain.

In terms of assembly, homooligomer and heterooligomer. Interacts with TRIM55. Interacts with titin/TTN. Interacts with RNF29, USP8, MAP1LC3A, MAP1LC3B, MAP1LC3C, GABARAP, GABARAPL1 and GABARAPL2. Binds to ubiquitin and ubiquitinated proteins. Interacts with SQSTM1. Interacts with TAX1BP1. Interacts with IRF3; this interaction mediates autophagic degradation of IRF3. Interacts with IL12A and IL12B. Phosphorylated by GSK3A; this phosphorylation inhibits NBR1 involvement in the formation of ubiquitinated protein aggregates.

It is found in the cytoplasm. Its subcellular location is the cytoplasmic vesicle. The protein resides in the autophagosome. It localises to the lysosome. The protein localises to the myofibril. It is found in the sarcomere. Its subcellular location is the m line. In terms of biological role, ubiquitin-binding autophagy adapter that participates in different processes including host defense or intracellular homeostasis. Possesses a double function during the selective autophagy by acting as a shuttle bringing ubiquitinated proteins to autophagosomes and also by participating in the formation of protein aggregates. Plays a role in the regulation of the innate immune response by modulating type I interferon production and targeting ubiquitinated IRF3 for autophagic degradation. In response to oxidative stress, promotes an increase in SQSTM1 levels, phosphorylation, and body formation by preventing its autophagic degradation. In turn, activates the KEAP1-NRF2/NFE2L2 antioxidant pathway. Also plays non-autophagy role by mediating the shuttle of IL-12 to late endosome for subsequent secretion. In Rattus norvegicus (Rat), this protein is Next to BRCA1 gene 1 protein (Nbr1).